Consider the following 307-residue polypeptide: 2-dehydropantoate 2-reductase (307 aa).

NADP(+) is bound by residues 7 to 12, Asn-102, and Ala-128; that span reads GSGAMG. Asn-102 is a binding site for substrate. Lys-184 functions as the Proton donor in the catalytic mechanism. Asn-188, Asn-192, and Ser-255 together coordinate substrate. Glu-268 contributes to the NADP(+) binding site.

This sequence belongs to the ketopantoate reductase family.

The protein resides in the cytoplasm. It carries out the reaction (R)-pantoate + NADP(+) = 2-dehydropantoate + NADPH + H(+). It participates in cofactor biosynthesis; (R)-pantothenate biosynthesis; (R)-pantoate from 3-methyl-2-oxobutanoate: step 2/2. Functionally, catalyzes the NADPH-dependent reduction of ketopantoate into pantoic acid. The chain is 2-dehydropantoate 2-reductase (apbA) from Streptococcus pyogenes serotype M1.